The primary structure comprises 259 residues: uncharacterized protein (259 aa).

3 consecutive transmembrane segments (helical) span residues 55 to 75 (ILILVLFSGTFLLSSYFSYLI), 85 to 105 (FPSITISLSSLLPPLIIFFSS), and 127 to 147 (FFFAFAVFFAASIAFLDLCCG).

The protein resides in the membrane. This is an uncharacterized protein from Arabidopsis thaliana (Mouse-ear cress).